The sequence spans 166 residues: Large ribosomal subunit protein uL10 (166 aa).

The protein belongs to the universal ribosomal protein uL10 family. Part of the ribosomal stalk of the 50S ribosomal subunit. The N-terminus interacts with L11 and the large rRNA to form the base of the stalk. The C-terminus forms an elongated spine to which L12 dimers bind in a sequential fashion forming a multimeric L10(L12)X complex.

Functionally, forms part of the ribosomal stalk, playing a central role in the interaction of the ribosome with GTP-bound translation factors. The protein is Large ribosomal subunit protein uL10 of Shewanella amazonensis (strain ATCC BAA-1098 / SB2B).